The primary structure comprises 522 residues: Glutamate--cysteine ligase (522 aa).

This sequence belongs to the glutamate--cysteine ligase type 1 family. Type 1 subfamily.

It catalyses the reaction L-cysteine + L-glutamate + ATP = gamma-L-glutamyl-L-cysteine + ADP + phosphate + H(+). It participates in sulfur metabolism; glutathione biosynthesis; glutathione from L-cysteine and L-glutamate: step 1/2. The protein is Glutamate--cysteine ligase of Vibrio parahaemolyticus serotype O3:K6 (strain RIMD 2210633).